The primary structure comprises 919 residues: Sarcosine dehydrogenase, mitochondrial (919 aa).

Residues 1–22 (MASLSRVLRVAATCPRGRAAWN) constitute a mitochondrion transit peptide. At Lys38 the chain carries N6-succinyllysine. His109 is modified (tele-8alpha-FAD histidine). Lys174 is modified (N6-acetyllysine; alternate). Residue Lys174 is modified to N6-succinyllysine; alternate. 4 positions are modified to N6-succinyllysine: Lys278, Lys378, Lys392, and Lys535. An N6-acetyllysine mark is found at Lys560 and Lys776. Tyr778 is subject to Phosphotyrosine. Residues Lys803, Lys885, and Lys905 each carry the N6-acetyllysine; alternate modification. Lys803, Lys885, and Lys905 each carry N6-succinyllysine; alternate.

This sequence belongs to the GcvT family. FAD is required as a cofactor.

It localises to the mitochondrion matrix. It catalyses the reaction (6S)-5,6,7,8-tetrahydrofolyl-(gamma-L-Glu)(n) + sarcosine + oxidized [electron-transfer flavoprotein] + H(+) = (6R)-5,10-methylenetetrahydrofolyl-(gamma-L-Glu)(n) + reduced [electron-transfer flavoprotein] + glycine. It functions in the pathway amine and polyamine degradation; sarcosine degradation; formaldehyde and glycine from sarcosine: step 1/1. In terms of biological role, catalyzes the last step of the oxidative degradation of choline to glycine. Converts sarcosine into glycine. The polypeptide is Sarcosine dehydrogenase, mitochondrial (Mus musculus (Mouse)).